Here is a 150-residue protein sequence, read N- to C-terminus: MKQRFSQVATVIFFVMSIRSPRNLGFFFTLALFVVLVCSQEWFSFEMNRSCSMKVEHRMQFLSTIISEHQKSDVNCWDQIAKKMNVYLFEQKVSGSDVFFLDGADCERFFERNFLRYLPSRKSSHPDLPIAELLPYIRKADIACAGKQLI.

The signal sequence occupies residues methionine 1–serine 39.

This is an uncharacterized protein from Saccharomyces cerevisiae (strain ATCC 204508 / S288c) (Baker's yeast).